Reading from the N-terminus, the 106-residue chain is Small ribosomal subunit protein bS16 (106 aa).

Belongs to the bacterial ribosomal protein bS16 family.

The chain is Small ribosomal subunit protein bS16 from Wolbachia pipientis wMel.